The sequence spans 445 residues: Vacuolar fusion protein CCZ1 homolog (445 aa).

The protein belongs to the CCZ1 family.

The sequence is that of Vacuolar fusion protein CCZ1 homolog from Dictyostelium discoideum (Social amoeba).